Here is a 595-residue protein sequence, read N- to C-terminus: Putative capsid protein V20 (595 aa).

Its subcellular location is the virion. Its function is as follows. May self assemble to form an icosahedral capsid. Most abundant protein in the virion. The sequence is that of Putative capsid protein V20 from Sputnik virophage.